Here is a 187-residue protein sequence, read N- to C-terminus: UPF0215 protein PAE0952 (187 aa).

It belongs to the UPF0215 family.

The polypeptide is UPF0215 protein PAE0952 (Pyrobaculum aerophilum (strain ATCC 51768 / DSM 7523 / JCM 9630 / CIP 104966 / NBRC 100827 / IM2)).